A 432-amino-acid polypeptide reads, in one-letter code: Adenylosuccinate synthetase (432 aa).

Residues 13 to 19 (GDEGKGK) and 41 to 43 (GHT) each bind GTP. The active-site Proton acceptor is Asp14. Mg(2+) contacts are provided by Asp14 and Gly41. IMP is bound by residues 14–17 (DEGK), 39–42 (NAGH), Thr130, Arg144, Gln225, Thr240, and Arg304. Residue His42 is the Proton donor of the active site. 300 to 306 (ATTGRRR) lines the substrate pocket. GTP contacts are provided by residues Arg306, 332–334 (KLD), and 415–417 (STG).

The protein belongs to the adenylosuccinate synthetase family. Homodimer. Mg(2+) is required as a cofactor.

It localises to the cytoplasm. The catalysed reaction is IMP + L-aspartate + GTP = N(6)-(1,2-dicarboxyethyl)-AMP + GDP + phosphate + 2 H(+). It participates in purine metabolism; AMP biosynthesis via de novo pathway; AMP from IMP: step 1/2. Functionally, plays an important role in the de novo pathway of purine nucleotide biosynthesis. Catalyzes the first committed step in the biosynthesis of AMP from IMP. This Edwardsiella ictaluri (strain 93-146) protein is Adenylosuccinate synthetase.